We begin with the raw amino-acid sequence, 382 residues long: Lipid-A-disaccharide synthase (382 aa).

The protein belongs to the LpxB family.

It carries out the reaction 2-N,3-O-bis[(3R)-3-hydroxytetradecanoyl]-alpha-D-glucosaminyl 1-phosphate + UDP-2-N,3-O-bis[(3R)-3-hydroxytetradecanoyl]-alpha-D-glucosamine = lipid A disaccharide (E. coli) + UDP + H(+). It catalyses the reaction a lipid X + a UDP-2-N,3-O-bis[(3R)-3-hydroxyacyl]-alpha-D-glucosamine = a lipid A disaccharide + UDP + H(+). The protein operates within glycolipid biosynthesis; lipid IV(A) biosynthesis; lipid IV(A) from (3R)-3-hydroxytetradecanoyl-[acyl-carrier-protein] and UDP-N-acetyl-alpha-D-glucosamine: step 5/6. In terms of biological role, condensation of UDP-2,3-diacylglucosamine and 2,3-diacylglucosamine-1-phosphate to form lipid A disaccharide, a precursor of lipid A, a phosphorylated glycolipid that anchors the lipopolysaccharide to the outer membrane of the cell. The chain is Lipid-A-disaccharide synthase from Salmonella arizonae (strain ATCC BAA-731 / CDC346-86 / RSK2980).